A 647-amino-acid chain; its full sequence is DNA mismatch repair protein MutL (647 aa).

It belongs to the DNA mismatch repair MutL/HexB family.

Its function is as follows. This protein is involved in the repair of mismatches in DNA. It is required for dam-dependent methyl-directed DNA mismatch repair. May act as a 'molecular matchmaker', a protein that promotes the formation of a stable complex between two or more DNA-binding proteins in an ATP-dependent manner without itself being part of a final effector complex. This chain is DNA mismatch repair protein MutL, found in Bacillus cereus (strain Q1).